Reading from the N-terminus, the 190-residue chain is Hypoxanthine/guanine phosphoribosyltransferase (190 aa).

It belongs to the purine/pyrimidine phosphoribosyltransferase family. Archaeal HPRT subfamily. As to quaternary structure, homodimer.

The protein resides in the cytoplasm. The catalysed reaction is IMP + diphosphate = hypoxanthine + 5-phospho-alpha-D-ribose 1-diphosphate. The enzyme catalyses GMP + diphosphate = guanine + 5-phospho-alpha-D-ribose 1-diphosphate. It functions in the pathway purine metabolism; IMP biosynthesis via salvage pathway; IMP from hypoxanthine: step 1/1. Its function is as follows. Catalyzes a salvage reaction resulting in the formation of IMP that is energically less costly than de novo synthesis. The sequence is that of Hypoxanthine/guanine phosphoribosyltransferase from Methanohalobium evestigatum (strain ATCC BAA-1072 / DSM 3721 / NBRC 107634 / OCM 161 / Z-7303).